We begin with the raw amino-acid sequence, 393 residues long: Protein TsgA (393 aa).

Transmembrane regions (helical) follow at residues 11–31, 51–71, 78–98, 101–121, 134–154, 162–182, 206–226, 245–265, 273–293, 297–317, 332–352, and 361–381; these read WISF…GMVM, FLNA…EIVP, FGFL…SLAL, AAMF…TFLV, LLFT…IAAF, WYWV…LTFG, IGVL…LGFI, TLVS…SFIL, ILTV…TGTP, AWSI…IITL, FVLT…GPIV, and LLTA…LGFV.

This sequence belongs to the major facilitator superfamily. TsgA family.

Its subcellular location is the cell inner membrane. This chain is Protein TsgA, found in Escherichia coli O6:K15:H31 (strain 536 / UPEC).